The sequence spans 306 residues: ORF-B protein (306 aa).

3 consecutive transmembrane segments (helical) span residues 92–112 (MIQW…FPFI), 120–140 (LTHL…VFGW), and 161–181 (VIEW…IVVS).

As to quaternary structure, interacts with host RACK1.

The protein localises to the host cytoplasm. It is found in the host cell membrane. This Sander vitreus (Walleye) protein is ORF-B protein.